Consider the following 676-residue polypeptide: Envelope glycoprotein (676 aa).

The N-terminal stretch at 1 to 32 is a signal peptide; it reads MGVTGILQLPRDRFKRTSFFLWVIILFQRTFS. The Extracellular portion of the chain corresponds to 33-650; that stretch reads IPLGVIHNST…NDNWWTGWRQ (618 aa). A glycan (N-linked (GlcNAc...) asparagine; by host) is linked at Asn-40. 5 cysteine pairs are disulfide-bonded: Cys-53-Cys-609, Cys-108-Cys-135, Cys-121-Cys-147, Cys-511-Cys-556, and Cys-601-Cys-608. A receptor-binding region spans residues 54 to 201; sequence RDKLSSTNQL…DFFSSHPLRE (148 aa). N-linked (GlcNAc...) asparagine; by host glycans are attached at residues Asn-204, Asn-228, Asn-238, Asn-257, Asn-268, Asn-296, Asn-317, Asn-333, Asn-346, Asn-386, and Asn-413. Residues 305–485 are mucin-like region; it reads ELSFTAVSNR…SGKLGLITNT (181 aa). Polar residues predominate over residues 314-335; sequence RAKNISGQSPARTSSDPGTNTT. The tract at residues 314 to 337 is disordered; it reads RAKNISGQSPARTSSDPGTNTTTE. Disordered regions lie at residues 373 to 392 and 402 to 479; these read TSLRPPITKPGPDNSTHNTP and TQVE…SGKL. A compositionally biased stretch (low complexity) spans 414–427; it reads ASTTSDTPPATTAA. Residues Asn-436, Asn-454, and Asn-462 are each glycosylated (N-linked (GlcNAc...) asparagine; by host). Residues 447–464 are compositionally biased toward polar residues; the sequence is ATTTSPQNHSETAGNNNT. The tract at residues 524 to 539 is fusion peptide; sequence GAAIGLAWIPYFGPAA. A coiled-coil region spans residues 554 to 595; sequence LICGLRQLANETTQALQLFLRATTELRTFSILNRKAIDFLLQ. The N-linked (GlcNAc...) asparagine; by host glycan is linked to Asn-563. A coiled-coil region spans residues 615 to 634; that stretch reads WTKNITDKIDQIIHDFVDKT. Asn-618 carries N-linked (GlcNAc...) asparagine; by host glycosylation. A helical membrane pass occupies residues 651–671; it reads WIPAGIGVTGVIIAVIALFCI. Residues Cys-670 and Cys-672 are each lipidated (S-palmitoyl cysteine; by host). At 672 to 676 the chain is on the cytoplasmic side; that stretch reads CKFVF.

The protein belongs to the filoviruses glycoprotein family. As to quaternary structure, homotrimer; each monomer consists of a GP1 and a GP2 subunit linked by disulfide bonds. The resulting peplomers (GP1,2) protrude from the virus surface as spikes. Interacts with host integrin alpha-V/ITGAV. Interacts with host CLEC10A. Binds also to host CD209 and CLEC4M/DC-SIGN(R). Interacts with host FOLR1. Interacts with BST2; this interaction inhibits the antiviral effect of BST2 and this allows viral release from infected cells. Interacts with host FCN1; this interaction enhances viral entry. Interacts with host TLR4; this interaction induces cell death in T-lymphocytes or proinflammatory cytokines and SOCS1 production in monocytes. In terms of assembly, interacts with host entry receptor NPC1. GP1 and GP2delta are part of GP1,2delta soluble complexes released by ectodomain shedding. Post-translationally, the signal peptide region modulates GP's high mannose glycosylation, thereby determining the efficiency of the interactions with DC-SIGN(R). In terms of processing, N-glycosylated. O-glycosylated in the mucin-like region. Post-translationally, palmitoylation of GP2 is not required for its function. In terms of processing, specific enzymatic cleavages in vivo yield mature proteins. The precursor is processed into GP1 and GP2 by host cell furin in the trans Golgi, and maybe by other host proteases, to yield the mature GP1 and GP2 proteins. The cleavage site corresponds to the furin optimal cleavage sequence [KR]-X-[KR]-R. This cleavage does not seem to be required for function. After the internalization of the virus into cell endosomes, GP1 C-terminus is removed by the endosomal proteases cathepsin B, cathepsin L, or both, leaving a 19-kDa N-terminal fragment which is further digested by cathepsin B. Proteolytic processing of GP1,2 by host ADAM17 can remove the transmembrane anchor of GP2 and leads to shedding of complexes consisting in GP1 and truncated GP2 (GP1,2delta).

It is found in the virion membrane. It localises to the host cell membrane. The protein resides in the secreted. In terms of biological role, trimeric GP1,2 complexes form the virion surface spikes and mediate the viral entry processes, with GP1 acting as the receptor-binding subunit and GP2 as the membrane fusion subunit. At later times of infection, down-regulates the expression of various host cell surface molecules that are essential for immune surveillance and cell adhesion. Down-modulates several integrins including ITGA1, ITGA2, ITGA3, ITGA4, ITGA5, ITGA6, ITGAV and ITGB1. This decrease in cell adhesion molecules may lead to cell detachment, contributing to the disruption of blood vessel integrity and hemorrhages developed during infection (cytotoxicity). Interacts with host TLR4 and thereby stimulates the differentiation and activation of monocytes leading to bystander death of T-lymphocytes. Down-regulates as well the function of host natural killer cells. Counteracts the antiviral effect of host BST2/tetherin that restricts release of progeny virions from infected cells. However, cooperates with VP40 and host BST2 to activate canonical NF-kappa-B pathway in a manner dependent on neddylation. Its function is as follows. Functions as a decoy for anti-GP1,2 antibodies thereby contributing to viral immune evasion. Interacts and activates host macrophages and dendritic cells inducing up-regulation of cytokine transcription. This effect is mediated throught activation of host TLR4. Responsible for binding to the receptor(s) on target cells. Interacts with CD209/DC-SIGN and CLEC4M/DC-SIGNR which act as cofactors for virus entry into dendritic cells (DCs) and endothelial cells. Binding to the macrophage specific lectin CLEC10A also seems to enhance virus infectivity. Interaction with FOLR1/folate receptor alpha may be a cofactor for virus entry in some cell types, although results are contradictory. Members of the Tyro3 receptor tyrosine kinase family also seem to be cell entry factors in filovirus infection. Once attached, the virions are internalized through clathrin-dependent endocytosis and/or macropinocytosis. After internalization of the virus into the endosomes of the host cell, proteolysis of GP1 by two cysteine proteases, CTSB/cathepsin B and CTSL/cathepsin L removes the glycan cap and allows GP1 binding to the host entry receptor NPC1. NPC1-binding, Ca(2+) and acidic pH induce a conformational change of GP2, which unmasks its fusion peptide and permit membranes fusion. Functionally, acts as a class I viral fusion protein. Under the current model, the protein has at least 3 conformational states: pre-fusion native state, pre-hairpin intermediate state, and post-fusion hairpin state. During viral and target cell membrane fusion, the coiled coil regions (heptad repeats) assume a trimer-of-hairpins structure, positioning the fusion peptide in close proximity to the C-terminal region of the ectodomain. The formation of this structure appears to drive apposition and subsequent fusion of viral and target cell membranes. Responsible for penetration of the virus into the cell cytoplasm by mediating the fusion of the membrane of the endocytosed virus particle with the endosomal membrane. Low pH in endosomes induces an irreversible conformational change in GP2, releasing the fusion hydrophobic peptide. The polypeptide is Envelope glycoprotein (GP) (Epomops franqueti (Franquet's epauletted fruit bat)).